The primary structure comprises 88 residues: Small ribosomal subunit protein uS15 (88 aa).

The protein belongs to the universal ribosomal protein uS15 family. As to quaternary structure, part of the 30S ribosomal subunit. Forms a bridge to the 50S subunit in the 70S ribosome, contacting the 23S rRNA.

In terms of biological role, one of the primary rRNA binding proteins, it binds directly to 16S rRNA where it helps nucleate assembly of the platform of the 30S subunit by binding and bridging several RNA helices of the 16S rRNA. Forms an intersubunit bridge (bridge B4) with the 23S rRNA of the 50S subunit in the ribosome. This is Small ribosomal subunit protein uS15 from Methylacidiphilum infernorum (isolate V4) (Methylokorus infernorum (strain V4)).